The primary structure comprises 387 residues: NAD(P)H oxidoreductase RTN4IP1, mitochondrial (387 aa).

The N-terminal 27 residues, 1-27 (MLMCRRWLVCSLRCHYRSFSFSAARRT), are a transit peptide targeting the mitochondrion. The 342-residue stretch at 38–379 (GKNDVLRFTK…QGHARGKTVV (342 aa)) folds into the Enoyl reductase (ER) domain. Ser-200, Gly-202, Val-203, Ser-223, Tyr-241, Leu-286, Gly-327, Phe-329, His-372, Ala-373, and Arg-374 together coordinate NADPH.

Belongs to the zinc-containing alcohol dehydrogenase family. Quinone oxidoreductase subfamily.

It localises to the mitochondrion matrix. It is found in the mitochondrion outer membrane. The enzyme catalyses a 3-demethylubiquinone + NADH + 2 H(+) = a 3-demethylubiquinol + NAD(+). It catalyses the reaction a 3-demethylubiquinone + NADPH + 2 H(+) = a 3-demethylubiquinol + NADP(+). The catalysed reaction is 3-demethylubiquinone-10 + NADH + 2 H(+) = 3-demethylubiquinol-10 + NAD(+). It carries out the reaction 3-demethylubiquinone-10 + NADPH + 2 H(+) = 3-demethylubiquinol-10 + NADP(+). The protein operates within cofactor biosynthesis; ubiquinone biosynthesis. NAD(P)H oxidoreductase involved in the ubiquinone biosynthetic pathway. Required for the O-methyltransferase activity of COQ3. Able to catalyze the oxidoreduction of 3-demethylubiquinone into 3-demethylubiquinol in vitro. However, it is unclear if 3-demethylubiquinone constitutes a substrate in vivo. May also play a role in the regulation of retinal ganglion cell (RGC) neurite outgrowth, and hence in the development of the inner retina and optic nerve. The polypeptide is NAD(P)H oxidoreductase RTN4IP1, mitochondrial (rtn4ip1) (Danio rerio (Zebrafish)).